Reading from the N-terminus, the 224-residue chain is LRP chaperone MESD (224 aa).

The signal sequence occupies residues 1-29 (MAASRWLRAVLLFLCASDLLLLPPPNAYA). The tract at residues 1–155 (MAASRWLRAV…DRAIFMLRDG (155 aa)) is chaperone domain. 2 disordered regions span residues 28–49 (YAAD…IRDY) and 178–224 (GQMY…REDL). The interval 156-195 (SYAWEIKDFLVSQDRCAEVTLEGQMYPGKGGGSKEKNKTK) is escort domain. Over residues 187 to 224 (GSKEKNKTKPEKAKKKEGDPKPRASKEDNRAGSRREDL) the composition is skewed to basic and acidic residues. N-linked (GlcNAc...) asparagine glycosylation occurs at Asn192. A Prevents secretion from ER motif is present at residues 221 to 224 (REDL).

This sequence belongs to the MESD family. In terms of assembly, monomer. Interacts with LRP5; the interaction prevents LRP5 from forming aggregates and chaperones LRP6 to the plasma membrane. Interacts with LRP6; the interaction prevents LRP6 from forming aggregates and chaperones LRP6 to the plasma membrane. Interacts with LRP4; the interaction promotes glycosylation of LRP4 and its cell-surface expression. As to expression, expressed in many tissues, but not in skeletal muscles. In the retina expressed in retinal ganglion cells, inner and outer plexiform layers, photoreceptor inner and outer segments and retinal pigment epithelium (at protein level).

The protein resides in the endoplasmic reticulum. Its function is as follows. Chaperone specifically assisting the folding of beta-propeller/EGF modules within the family of low-density lipoprotein receptors (LDLRs). Acts as a modulator of the Wnt pathway through chaperoning the coreceptors of the canonical Wnt pathway, LRP5 and LRP6, to the plasma membrane. Essential for specification of embryonic polarity and mesoderm induction. Plays an essential role in neuromuscular junction (NMJ) formation by promoting cell-surface expression of LRP4. May regulate phagocytosis of apoptotic retinal pigment epithelium (RPE) cells. The chain is LRP chaperone MESD from Mus musculus (Mouse).